The following is a 264-amino-acid chain: Small ribosomal subunit protein uS2 (264 aa).

Belongs to the universal ribosomal protein uS2 family.

This is Small ribosomal subunit protein uS2 (rpsB) from Helicobacter pylori (strain ATCC 700392 / 26695) (Campylobacter pylori).